The sequence spans 64 residues: Large ribosomal subunit protein bL35 (64 aa).

Residues 1–22 (MPKMKSHTGMGKRVRVTGKGKI) show a composition bias toward basic residues. A disordered region spans residues 1–39 (MPKMKSHTGMGKRVRVTGKGKIVKQQAGLRHNLEKKPST).

This sequence belongs to the bacterial ribosomal protein bL35 family.

The sequence is that of Large ribosomal subunit protein bL35 from Salinispora arenicola (strain CNS-205).